The primary structure comprises 660 residues: UvrABC system protein B (660 aa).

The region spanning 26 to 196 (DGIDEKKEHQ…ELNKGQFDVK (171 aa)) is the Helicase ATP-binding domain. 39-46 (GVTGSGKT) provides a ligand contact to ATP. Residues 92–115 (YFDFYKPEAYIPKSDLYIEKTSKN) carry the Beta-hairpin motif. One can recognise a Helicase C-terminal domain in the interval 431–593 (QIEDIYDHLK…IIPKTIVKPI (163 aa)). In terms of domain architecture, UVR spans 622–657 (KKFIDQMVRKMTQLAKANKFEEAIEIRDYLIEIGIE).

This sequence belongs to the UvrB family. Forms a heterotetramer with UvrA during the search for lesions. Interacts with UvrC in an incision complex.

Its subcellular location is the cytoplasm. In terms of biological role, the UvrABC repair system catalyzes the recognition and processing of DNA lesions. A damage recognition complex composed of 2 UvrA and 2 UvrB subunits scans DNA for abnormalities. Upon binding of the UvrA(2)B(2) complex to a putative damaged site, the DNA wraps around one UvrB monomer. DNA wrap is dependent on ATP binding by UvrB and probably causes local melting of the DNA helix, facilitating insertion of UvrB beta-hairpin between the DNA strands. Then UvrB probes one DNA strand for the presence of a lesion. If a lesion is found the UvrA subunits dissociate and the UvrB-DNA preincision complex is formed. This complex is subsequently bound by UvrC and the second UvrB is released. If no lesion is found, the DNA wraps around the other UvrB subunit that will check the other stand for damage. This is UvrABC system protein B from Metamycoplasma arthritidis (strain 158L3-1) (Mycoplasma arthritidis).